Here is an 803-residue protein sequence, read N- to C-terminus: Leucine--tRNA ligase (803 aa).

The 'HIGH' region signature appears at 40 to 51 (PYPSGAGLHVGH). Residues 575–579 (KMSKS) carry the 'KMSKS' region motif. Position 578 (Lys578) interacts with ATP.

It belongs to the class-I aminoacyl-tRNA synthetase family.

The protein localises to the cytoplasm. The catalysed reaction is tRNA(Leu) + L-leucine + ATP = L-leucyl-tRNA(Leu) + AMP + diphosphate. The sequence is that of Leucine--tRNA ligase from Listeria welshimeri serovar 6b (strain ATCC 35897 / DSM 20650 / CCUG 15529 / CIP 8149 / NCTC 11857 / SLCC 5334 / V8).